The chain runs to 523 residues: 2-isopropylmalate synthase (523 aa).

The Pyruvate carboxyltransferase domain occupies 5–267 (VIIFDTTLRD…HTNINHHEIW (263 aa)). Residues Asp-14, His-202, His-204, and Asn-238 each contribute to the Mn(2+) site. The tract at residues 392-523 (RLDYFSVQSG…QNKENNKETV (132 aa)) is regulatory domain.

This sequence belongs to the alpha-IPM synthase/homocitrate synthase family. LeuA type 1 subfamily. In terms of assembly, homodimer. Requires Mn(2+) as cofactor.

Its subcellular location is the cytoplasm. The catalysed reaction is 3-methyl-2-oxobutanoate + acetyl-CoA + H2O = (2S)-2-isopropylmalate + CoA + H(+). The protein operates within amino-acid biosynthesis; L-leucine biosynthesis; L-leucine from 3-methyl-2-oxobutanoate: step 1/4. Catalyzes the condensation of the acetyl group of acetyl-CoA with 3-methyl-2-oxobutanoate (2-ketoisovalerate) to form 3-carboxy-3-hydroxy-4-methylpentanoate (2-isopropylmalate). This Salmonella agona (strain SL483) protein is 2-isopropylmalate synthase.